Reading from the N-terminus, the 377-residue chain is 23S rRNA (uracil(747)-C(5))-methyltransferase RlmC (377 aa).

Cysteine 3, cysteine 11, cysteine 14, and cysteine 87 together coordinate [4Fe-4S] cluster. Glutamine 212, phenylalanine 241, glutamate 262, and asparagine 307 together coordinate S-adenosyl-L-methionine. The active-site Nucleophile is cysteine 334.

The protein belongs to the class I-like SAM-binding methyltransferase superfamily. RNA M5U methyltransferase family. RlmC subfamily.

It catalyses the reaction uridine(747) in 23S rRNA + S-adenosyl-L-methionine = 5-methyluridine(747) in 23S rRNA + S-adenosyl-L-homocysteine + H(+). Catalyzes the formation of 5-methyl-uridine at position 747 (m5U747) in 23S rRNA. The chain is 23S rRNA (uracil(747)-C(5))-methyltransferase RlmC from Xenorhabdus bovienii (strain SS-2004) (Xenorhabdus nematophila subsp. bovienii).